The chain runs to 479 residues: FAD-dependent monooxygenase ausM (479 aa).

Residues glutamate 40, glycine 54, and arginine 113 each contribute to the FAD site. Tyrosine 224 is a catalytic residue. N-linked (GlcNAc...) asparagine glycosylation occurs at asparagine 289. Aspartate 316 and alanine 329 together coordinate FAD. The chain crosses the membrane as a helical span at residues 449–469 (TLPWLVISLPVLASMLCYLVY).

This sequence belongs to the paxM FAD-dependent monooxygenase family. FAD is required as a cofactor.

Its subcellular location is the membrane. It participates in secondary metabolite biosynthesis; terpenoid biosynthesis. FAD-dependent monooxygenase; part of the gene cluster B that mediates the biosynthesis of austinol and dehydroaustinol, two fungal meroterpenoids. The first step of the pathway is the synthesis of 3,5-dimethylorsellinic acid by the polyketide synthase ausA. 3,5-dimethylorsellinic acid is then prenylated by the polyprenyl transferase ausN. Further epoxidation by the FAD-dependent monooxygenase ausM and cyclization by the probable terpene cyclase ausL lead to the formation of protoaustinoid A. Protoaustinoid A is then oxidized to spiro-lactone preaustinoid A3 by the combined action of the FAD-binding monooxygenases ausB and ausC, and the dioxygenase ausE. Acid-catalyzed keto-rearrangement and ring contraction of the tetraketide portion of preaustinoid A3 by ausJ lead to the formation of preaustinoid A4. The aldo-keto reductase ausK, with the help of ausH, is involved in the next step by transforming preaustinoid A4 into isoaustinone which is in turn hydroxylated by the P450 monooxygenase ausI to form austinolide. Finally, the cytochrome P450 monooxygenase ausG modifies austinolide to austinol. Austinol can be further modified to dehydroaustinol which forms a diffusible complex with diorcinol that initiates conidiation. Due to genetic rearrangements of the clusters and the subsequent loss of some enzymes, the end products of the Emericella nidulans austinoid biosynthesis clusters are austinol and dehydroaustinol, even if additional enzymes, such as the O-acetyltransferase ausQ and the cytochrome P450 monooxygenase ausR are still functional. The sequence is that of FAD-dependent monooxygenase ausM from Emericella nidulans (strain FGSC A4 / ATCC 38163 / CBS 112.46 / NRRL 194 / M139) (Aspergillus nidulans).